Here is a 1969-residue protein sequence, read N- to C-terminus: Echinoderm microtubule-associated protein-like 5 (1969 aa).

10 WD repeats span residues glycine 59–valine 100, valine 104–methionine 145, glycine 148–lysine 187, glycine 195–glutamine 233, alanine 235–aspartate 273, glycine 280–glutamine 321, histidine 323–arginine 362, aspartate 406–glycine 445, glycine 449–serine 488, and glycine 561–aspartate 601. The disordered stretch occupies residues glutamate 609 to isoleucine 633. Positions serine 619–isoleucine 633 are enriched in acidic residues. WD repeat units lie at residues glycine 725–isoleucine 766, histidine 770–isoleucine 811, glycine 814–arginine 853, glycine 861–lysine 900, alanine 901–alanine 940, histidine 996–alanine 1035, lysine 1038–serine 1077, histidine 1080–isoleucine 1120, and alanine 1236–lysine 1276. Disordered stretches follow at residues arginine 1274–aspartate 1297 and glutamine 1326–lysine 1355. Acidic residues predominate over residues serine 1281–tyrosine 1294. The span at glutamine 1326–proline 1337 shows a compositional bias: basic and acidic residues. 10 WD repeats span residues glutamate 1412–isoleucine 1463, tyrosine 1467–serine 1508, glycine 1511–lysine 1550, alanine 1560–alanine 1598, alanine 1600–arginine 1646, glycine 1691–lysine 1731, asparagine 1733–arginine 1774, aspartate 1775–arginine 1814, alanine 1887–lysine 1926, and glycine 1932–histidine 1969.

It belongs to the WD repeat EMAP family.

It localises to the cytoplasm. Its subcellular location is the cytoskeleton. In terms of biological role, may modify the assembly dynamics of microtubules, such that microtubules are slightly longer, but more dynamic. This Homo sapiens (Human) protein is Echinoderm microtubule-associated protein-like 5 (EML5).